A 58-amino-acid polypeptide reads, in one-letter code: Proteinase inhibitor PSKP-2 (58 aa).

The region spanning 1–58 is the Kazal-like domain; it reads VIEPDCKKYEGKKCPPDIALVCGTNGREYYNECALCVFIRDSTLKADKAIKIKKWGKC. 3 cysteine pairs are disulfide-bonded: Cys6–Cys36, Cys14–Cys33, and Cys22–Cys58.

As to expression, skin.

It localises to the secreted. Its function is as follows. May have a role in mucosal defense against microbes by interacting directly with their membranes. The chain is Proteinase inhibitor PSKP-2 from Phyllomedusa sauvagei (Sauvage's leaf frog).